Here is a 635-residue protein sequence, read N- to C-terminus: Threonine--tRNA ligase (635 aa).

Positions 1 to 61 (MIQITLPDSS…SQDSALSIVT (61 aa)) constitute a TGS domain. The segment at 242 to 533 (DHRKLGKELD…LIEEHAGALP (292 aa)) is catalytic. Residues Cys333, His384, and His510 each coordinate Zn(2+).

This sequence belongs to the class-II aminoacyl-tRNA synthetase family. Homodimer. Zn(2+) serves as cofactor.

It is found in the cytoplasm. It catalyses the reaction tRNA(Thr) + L-threonine + ATP = L-threonyl-tRNA(Thr) + AMP + diphosphate + H(+). In terms of biological role, catalyzes the attachment of threonine to tRNA(Thr) in a two-step reaction: L-threonine is first activated by ATP to form Thr-AMP and then transferred to the acceptor end of tRNA(Thr). Also edits incorrectly charged L-seryl-tRNA(Thr). In Polaromonas naphthalenivorans (strain CJ2), this protein is Threonine--tRNA ligase.